The chain runs to 787 residues: Integrin beta-6 (787 aa).

Residues 1-21 (MGIELLCLFFLFLGRNDHVQG) form the signal peptide. Residues 22–71 (GCAMGGAETCEDCLLIGPQCAWCSQENFTHLSGVGERCDTPANLLAKGCQ) enclose the PSI domain. Over 22-708 (GCAMGGAETC…KDCPKPPNIP (687 aa)) the chain is Extracellular. 19 disulfides stabilise this stretch: cysteine 23/cysteine 41, cysteine 31/cysteine 454, cysteine 34/cysteine 59, cysteine 44/cysteine 70, cysteine 197/cysteine 204, cysteine 252/cysteine 293, cysteine 394/cysteine 406, cysteine 426/cysteine 452, cysteine 456/cysteine 476, cysteine 467/cysteine 479, cysteine 481/cysteine 490, cysteine 492/cysteine 519, cysteine 502/cysteine 517, cysteine 511/cysteine 522, cysteine 524/cysteine 537, cysteine 539/cysteine 560, cysteine 544/cysteine 558, cysteine 552/cysteine 563, and cysteine 565/cysteine 574. N-linked (GlcNAc...) asparagine glycosylation is found at asparagine 48 and asparagine 97. Residues 131–371 (YPVDLYYLMD…QLIISAYEEL (241 aa)) form the VWFA domain. 3 residues coordinate Mg(2+): aspartate 140, serine 142, and serine 144. The Ca(2+) site is built by serine 144, aspartate 147, aspartate 148, and glutamate 179. Positions 235, 237, 239, and 240 each coordinate Ca(2+). A Mg(2+)-binding site is contributed by glutamate 240. Asparagine 260 is a glycosylation site (N-linked (GlcNAc...) asparagine). Ca(2+) is bound by residues aspartate 271 and lysine 355. An N-linked (GlcNAc...) asparagine glycan is attached at asparagine 387. Asparagine 418 carries N-linked (GlcNAc...) asparagine glycosylation. I-EGF domains are found at residues 456–491 (CQKE…HHCE), 492–538 (CGED…PYCQ), 539–575 (CDNF…EYCN), and 576–615 (CTTS…PACE). 2 N-linked (GlcNAc...) asparagine glycosylation sites follow: asparagine 463 and asparagine 471. N-linked (GlcNAc...) asparagine glycosylation is present at asparagine 541. Residue asparagine 575 is glycosylated (N-linked (GlcNAc...) asparagine). 9 disulfide bridges follow: cysteine 576–cysteine 599, cysteine 583–cysteine 597, cysteine 591–cysteine 602, cysteine 604–cysteine 614, cysteine 617–cysteine 620, cysteine 624–cysteine 670, cysteine 630–cysteine 649, cysteine 633–cysteine 645, and cysteine 678–cysteine 701. The helical transmembrane segment at 709–729 (MIMLGVSLAILLIGVALLCIW) threads the bilayer. The tract at residues 730–757 (KLLVSFHDRKEVAKFEAERSKAKWQTGT) is interaction with HAX1. Residues 730–787 (KLLVSFHDRKEVAKFEAERSKAKWQTGTNPLYRGSTSTFKNVTYKHKEKQKVDLSTDG) are Cytoplasmic-facing.

This sequence belongs to the integrin beta chain family. Heterodimer of an alpha and a beta subunit. Interacts with FLNB. Interacts with HAX1. ITGAV:ITGB6 interacts with FBN1. ITGAV:ITGB6 interacts with TGFB1.

Its subcellular location is the cell membrane. It localises to the cell junction. The protein resides in the focal adhesion. Functionally, integrin alpha-V:beta-6 (ITGAV:ITGB6) is a receptor for fibronectin and cytotactin. It recognizes the sequence R-G-D in its ligands. ITGAV:ITGB6 acts as a receptor for fibrillin-1 (FBN1) and mediates R-G-D-dependent cell adhesion to FBN1. Integrin alpha-V:beta-6 (ITGAV:ITGB6) mediates R-G-D-dependent release of transforming growth factor beta-1 (TGF-beta-1) from regulatory Latency-associated peptide (LAP), thereby playing a key role in TGF-beta-1 activation. This is Integrin beta-6 (ITGB6) from Ovis aries (Sheep).